Here is an 866-residue protein sequence, read N- to C-terminus: Ribosome biogenesis protein BOP1 homolog (866 aa).

Disordered stretches follow at residues 1–180 (MVAN…EETR) and 214–241 (PPEA…EEDI). Acidic residues-rich tracts occupy residues 37-52 (VDDE…DEEN), 60-146 (GNDE…LEEP), and 167-179 (TAED…DEET). WD repeat units follow at residues 527-566 (GHTD…CIRT), 568-608 (PTGD…SLLV), 697-735 (KSKG…LLKK), 738-777 (PSCK…RPYQ), 781-820 (LHHS…DLLQ), and 836-866 (VNDF…RLYT).

Belongs to the WD repeat BOP1/ERB1 family.

Its subcellular location is the nucleus. It localises to the nucleolus. The protein localises to the nucleoplasm. In terms of biological role, required for maturation of ribosomal RNAs and formation of the large ribosomal subunit. The chain is Ribosome biogenesis protein BOP1 homolog from Aedes aegypti (Yellowfever mosquito).